Reading from the N-terminus, the 814-residue chain is MDLSATPSRSKSGLRSSPRKPVAAPAVAQMDLSTPSKPTPRRKPKAPPVAAPMSPVTPSSVRRSSRLLETPTKVTSETPVKPTPTPKRKRAAPSPSPKTPTQSEPKRQRQRQRQRQQPKKPKKRAYYRKVVYDGGEFAAGDDVYVKRRDGAESDAEDPEAEECRVCFRAGAAVMVECDVCLGGFHLRCVRPPLRRVPEGDWACPYCEAERAGKAIERPKPPEGKRIVRTAKEKLLSSDLWAARIESLWREPDGIFWAKVRWYIIPEETAAGRQPHNLRRELYRTNDLADIEMETILRHCYVMSPKEFKDASDQGDDVFYCEYEYDIHWHNFKRLADIDDEPETKEDPGDEPYNAGNDYVSDSDEDSEYDEEEEPTKCSSARTHQSHALAANLRKGRTYGLQKIGIRKIPEHVRCHQKTNLEKAKATLLLATLPKSLPCRDKEMEEISAFVKDAICNDQCLGRCLYIHGVPGTGKTMSVLAVMRRLRSELDSGNLRPYSFIEINGLKLASPENIYKVIYEQLSGHRVGWKKALHYLTEHFSGGTKIGKQANQPIILLIDELDLLLTRNQSVLYNILDWPTRPNSNLVVIGIANTMDLPEKLLPRISSRMGIQRLCFGPYNYRQLQEIITSRLKGIDAFEDQAIEFASRKVAAMSGDARRALEICRRAAEFADYRVKQSGHTSVNRGKNVVCMGDIEAAIQEVFQAPHIQVMKNCPKFGKIILVAMVHELYRSGLGEVMFDKLAATVLSWCHVNRELLPGYDTLLKICCKLGEGKIILCEEGTKHKLQKLQLNYPSDDVTFALKESPDIPWLSKYL.

Residues 1-15 (MDLSATPSRSKSGLR) are compositionally biased toward polar residues. The disordered stretch occupies residues 1-127 (MDLSATPSRS…PKKPKKRAYY (127 aa)). Composition is skewed to low complexity over residues 51-62 (APMSPVTPSSVR) and 69-80 (ETPTKVTSETPV). The Nuclear localization signal motif lies at 105 to 112 (PKRQRQRQ). Residues 108–127 (QRQRQRQRQQPKKPKKRAYY) show a composition bias toward basic residues. Positions 157–181 (DPEAEECRVCFRAGAAVMVECDVCL) are histone H3 binding. A PHD-type zinc finger spans residues 160–209 (AEECRVCFRAGAAVMVECDVCLGGFHLRCVRPPLRRVPEGDWACPYCEAE). Positions 163, 166, 177, 180, 185, and 188 each coordinate Zn(2+). The tract at residues 197–201 (PEGDW) is histone H3 binding. Zn(2+) is bound by residues Cys-203 and Cys-206. The region spanning 218 to 335 (PKPPEGKRIV…IHWHNFKRLA (118 aa)) is the BAH domain. Residues 310-315 (ASDQGD) form a histone H3 binding region. 2 stretches are compositionally biased toward acidic residues: residues 339 to 349 (DEPETKEDPGD) and 360 to 373 (SDSD…EEEE). The disordered stretch occupies residues 339–384 (DEPETKEDPGDEPYNAGNDYVSDSDEDSEYDEEEEPTKCSSARTHQ). The segment at 433–804 (PKSLPCRDKE…DDVTFALKES (372 aa)) is necessary and sufficient for ORC complex assembly. Residues 468-475 (GVPGTGKT) and 468-476 (GVPGTGKTM) each bind ATP. The Mg(2+) site is built by Asp-558 and Glu-559. The ATP site is built by Glu-559, Asn-592, and Arg-657.

It belongs to the ORC1 family. As to quaternary structure, component of the origin recognition complex (ORC) composed of at least ORC1, ORC2, ORC3, ORC4, ORC5 and ORC6. ORC is regulated in a cell-cycle and development dependent manner. It is sequentially assembled at the exit from anaphase of mitosis and disassembled as cells enter S phase. Binds unmodified and methylated histone H3. In terms of tissue distribution, expressed strongly in root tips and shoot apical meristem (SAM), and weakly in young leaves. Not detected in mature leaves.

The protein localises to the nucleus. Its function is as follows. Essential protein. Component of the origin recognition complex (ORC) that binds origins of replication. It has a role in both chromosomal replication and mating type transcriptional silencing. Binds to the ARS consensus sequence (ACS) of origins of replication. H3K4me3 effector that positively regulates the transcription of a subset of genes. Required for cell proliferation. This Oryza sativa subsp. japonica (Rice) protein is Origin of replication complex subunit 1.